The following is a 367-amino-acid chain: Endophilin-A2 (367 aa).

A membrane-binding amphipathic helix region spans residues 1–21 (MSVAGLKKQFYKASQLVSEKV). A BAR domain is found at 18 to 249 (SEKVGGAEGT…LKRRMREASS (232 aa)). The interval 60 to 87 (PNPASRAKLTMLNTMSKIRGQVKNPGYP) is required for dimerization upon membrane association. A coiled-coil region spans residues 181 to 250 (EELRQAMEKF…KRRMREASSR (70 aa)). The interaction with ARC stretch occupies residues 218 to 254 (LVDAQLDYHRQAVQILDELAEKLKRRMREASSRPRRE). Positions 243-293 (RMREASSRPRREYKPKPRETYDFGESDQSNGGFSCTPTPKVSASSSFRSDK) are disordered. Positions 245 to 263 (REASSRPRREYKPKPRETY) are enriched in basic and acidic residues. A compositionally biased stretch (polar residues) spans 268–289 (SDQSNGGFSCTPTPKVSASSSF). An SH3 domain is found at 305-364 (LDQPCCKALYDFEPENDGELGFKEGDIITLTNQIDENWYEGMINGQSGFFPLNYVEVLVP).

This sequence belongs to the endophilin family. As to quaternary structure, interacts with ARC. Interacts with SYNJ1 and DNM1. Highest level in central region of the theca of developing follicles (at protein level). Expressed at highest level in brain and testis, at high level in kidney, lung and stroma, low level in spleen and adrenal gland (at protein level). Expressed in most tissue with highest levels in small ovarian follicles, brain and testis.

The protein localises to the cytoplasm. It localises to the early endosome membrane. The protein resides in the cell projection. It is found in the podosome. Implicated in endocytosis. May recruit other proteins to membranes with high curvature. The polypeptide is Endophilin-A2 (Gallus gallus (Chicken)).